A 203-amino-acid chain; its full sequence is Small ribosomal subunit protein uS7B (203 aa).

It belongs to the universal ribosomal protein uS7 family. As to quaternary structure, component of the small ribosomal subunit (SSU). Mature yeast ribosomes consist of a small (40S) and a large (60S) subunit. The 40S small subunit contains 1 molecule of ribosomal RNA (18S rRNA) and at least 33 different proteins. The large 60S subunit contains 3 rRNA molecules (25S, 5.8S and 5S rRNA) and at least 46 different proteins.

It localises to the cytoplasm. In terms of biological role, component of the ribosome, a large ribonucleoprotein complex responsible for the synthesis of proteins in the cell. The small ribosomal subunit (SSU) binds messenger RNAs (mRNAs) and translates the encoded message by selecting cognate aminoacyl-transfer RNA (tRNA) molecules. The large subunit (LSU) contains the ribosomal catalytic site termed the peptidyl transferase center (PTC), which catalyzes the formation of peptide bonds, thereby polymerizing the amino acids delivered by tRNAs into a polypeptide chain. The nascent polypeptides leave the ribosome through a tunnel in the LSU and interact with protein factors that function in enzymatic processing, targeting, and the membrane insertion of nascent chains at the exit of the ribosomal tunnel. The polypeptide is Small ribosomal subunit protein uS7B (rps502) (Schizosaccharomyces pombe (strain 972 / ATCC 24843) (Fission yeast)).